The primary structure comprises 797 residues: Homoaconitase, mitochondrial (797 aa).

A mitochondrion-targeting transit peptide spans 1 to 47; the sequence is MVARFVPSAMTVLVARRGLAMASTRRGWRGLAVNLKPAAGRQWRQAY. Residues C404, C471, and C474 each coordinate [4Fe-4S] cluster.

Belongs to the aconitase/IPM isomerase family. The cofactor is [4Fe-4S] cluster.

The protein resides in the mitochondrion. It catalyses the reaction (2R,3S)-homoisocitrate = cis-homoaconitate + H2O. It functions in the pathway amino-acid biosynthesis; L-lysine biosynthesis via AAA pathway; L-alpha-aminoadipate from 2-oxoglutarate: step 3/5. In terms of biological role, catalyzes the reversible hydration of cis-homoaconitate to (2R,3S)-homoisocitrate, a step in the alpha-aminoadipate pathway for lysine biosynthesis. The chain is Homoaconitase, mitochondrial (LYS4) from Chaetomium globosum (strain ATCC 6205 / CBS 148.51 / DSM 1962 / NBRC 6347 / NRRL 1970) (Soil fungus).